The chain runs to 82 residues: Putative membrane protein insertion efficiency factor (82 aa).

This sequence belongs to the UPF0161 family.

The protein resides in the cell inner membrane. In terms of biological role, could be involved in insertion of integral membrane proteins into the membrane. In Synechococcus elongatus (strain ATCC 33912 / PCC 7942 / FACHB-805) (Anacystis nidulans R2), this protein is Putative membrane protein insertion efficiency factor.